We begin with the raw amino-acid sequence, 210 residues long: FMN-dependent NADH:quinone oxidoreductase (210 aa).

Residues serine 9 and 15–17 (SHS) contribute to the FMN site.

The protein belongs to the azoreductase type 1 family. Homodimer. It depends on FMN as a cofactor.

The catalysed reaction is 2 a quinone + NADH + H(+) = 2 a 1,4-benzosemiquinone + NAD(+). The enzyme catalyses N,N-dimethyl-1,4-phenylenediamine + anthranilate + 2 NAD(+) = 2-(4-dimethylaminophenyl)diazenylbenzoate + 2 NADH + 2 H(+). Its function is as follows. Quinone reductase that provides resistance to thiol-specific stress caused by electrophilic quinones. Functionally, also exhibits azoreductase activity. Catalyzes the reductive cleavage of the azo bond in aromatic azo compounds to the corresponding amines. The polypeptide is FMN-dependent NADH:quinone oxidoreductase (Mesorhizobium japonicum (strain LMG 29417 / CECT 9101 / MAFF 303099) (Mesorhizobium loti (strain MAFF 303099))).